The following is an 814-amino-acid chain: Rho GTPase-activating protein 44 (814 aa).

In terms of domain architecture, BAR spans 14-249 (QTVGRAEKTE…IKAQQEAWVE (236 aa)). The Rho-GAP domain maps to 255 to 445 (KPLEEHLMIS…PIIQHADWFF (191 aa)). Disordered regions lie at residues 467–493 (ANYSSMPSPDMDPADRRQPEQARRPLS), 531–768 (SAGR…SMST), and 784–814 (STLRLSPLEHARRHSVTDKRDSEEESESTAL). Basic and acidic residues predominate over residues 479–489 (PADRRQPEQAR). The residue at position 493 (serine 493) is a Phosphoserine. Low complexity-rich tracts occupy residues 531–541 (SAGRKAACAPP), 567–581 (SPATPAPALSPSGAS), 598–612 (SPGSGQKGSPGSIQG), 622–637 (PQPAASPSQLPADQSP), 684–704 (SPYGLSYPPGYSMASGQLSPA), and 741–752 (SVSLSASSPQST). The interaction with BST2 stretch occupies residues 727 to 814 (KPRQRPTLPP…SEEESESTAL (88 aa)). A compositionally biased stretch (basic and acidic residues) spans 790-805 (PLEHARRHSVTDKRDS). Residue serine 805 is modified to Phosphoserine. The PDZ-binding signature appears at 811–814 (STAL).

As to quaternary structure, interacts with BST2 (via cytoplasmic domain). Interacts (probably via PDZ-binding motif) with SHANK3 (via PDZ domain); the interaction takes place in dendritic spines and promotes GRIA1 exocytosis. Expressed in brain, detected at high levels in hippocampal CA1 (at protein level).

Its subcellular location is the cell projection. The protein localises to the dendritic spine. The protein resides in the recycling endosome. It localises to the presynapse. It is found in the dendrite. GTPase-activating protein (GAP) that stimulates the GTPase activity of Rho-type GTPases. Thereby, controls Rho-type GTPases cycling between their active GTP-bound and inactive GDP-bound states. Acts as a GAP at least for CDC42 and RAC1. In neurons, is involved in dendritic spine formation and synaptic plasticity in a specific RAC1-GAP activity. Limits the initiation of exploratory dendritic filopodia. Recruited to actin-patches that seed filopodia, binds specifically to plasma membrane sections that are deformed inward by acto-myosin mediated contractile forces. Acts through GAP activity on RAC1 to reduce actin polymerization necessary for filopodia formation. In association with SHANK3, promotes GRIA1 exocytosis from recycling endosomes and spine morphological changes associated to long-term potentiation. The sequence is that of Rho GTPase-activating protein 44 from Rattus norvegicus (Rat).